We begin with the raw amino-acid sequence, 993 residues long: Importin subunit beta-5 (993 aa).

Residues Ala-24–Ser-100 enclose the Importin N-terminal domain.

The protein localises to the nucleus. In terms of biological role, required for nuclear protein import and mediates docking of import substrate to distinct nucleoporins. Serves a receptor for nuclear localization signals. Mediates the nuclear import of TATA-binding protein (TBP) and of histones H2A and H2B. In Schizosaccharomyces pombe (strain 972 / ATCC 24843) (Fission yeast), this protein is Importin subunit beta-5 (kap114).